A 737-amino-acid chain; its full sequence is Catalase-peroxidase 2 (737 aa).

The tract at residues 1-33 (MPEATEHPPIGEAQTEPAQSGCPMVIKPPVEGG) is disordered. Residues 107–235 (WHAAGTYRVQ…LGASHMGLIY (129 aa)) constitute a cross-link (tryptophyl-tyrosyl-methioninium (Trp-Tyr) (with M-261)). His108 (proton acceptor) is an active-site residue. Positions 235–261 (YVNPEGPEGNPDPIAAAIDIRETFGRM) form a cross-link, tryptophyl-tyrosyl-methioninium (Tyr-Met) (with W-107). His276 contributes to the heme binding site.

The protein belongs to the peroxidase family. Peroxidase/catalase subfamily. As to quaternary structure, homodimer or homotetramer. Heme b serves as cofactor. Post-translationally, formation of the three residue Trp-Tyr-Met cross-link is important for the catalase, but not the peroxidase activity of the enzyme.

It catalyses the reaction H2O2 + AH2 = A + 2 H2O. The catalysed reaction is 2 H2O2 = O2 + 2 H2O. In terms of biological role, bifunctional enzyme with both catalase and broad-spectrum peroxidase activity. This is Catalase-peroxidase 2 from Mycolicibacterium vanbaalenii (strain DSM 7251 / JCM 13017 / BCRC 16820 / KCTC 9966 / NRRL B-24157 / PYR-1) (Mycobacterium vanbaalenii).